The chain runs to 508 residues: Maturase K (508 aa).

The protein belongs to the intron maturase 2 family. MatK subfamily.

Its subcellular location is the plastid. It localises to the chloroplast. Usually encoded in the trnK tRNA gene intron. Probably assists in splicing its own and other chloroplast group II introns. The protein is Maturase K of Ranunculus lingua (Greater spearwort).